The sequence spans 362 residues: Histidinol-phosphate aminotransferase 1 (362 aa).

K226 carries the N6-(pyridoxal phosphate)lysine modification.

Belongs to the class-II pyridoxal-phosphate-dependent aminotransferase family. Histidinol-phosphate aminotransferase subfamily. Homodimer. Pyridoxal 5'-phosphate is required as a cofactor.

It catalyses the reaction L-histidinol phosphate + 2-oxoglutarate = 3-(imidazol-4-yl)-2-oxopropyl phosphate + L-glutamate. It participates in amino-acid biosynthesis; L-histidine biosynthesis; L-histidine from 5-phospho-alpha-D-ribose 1-diphosphate: step 7/9. This is Histidinol-phosphate aminotransferase 1 from Dechloromonas aromatica (strain RCB).